A 229-amino-acid polypeptide reads, in one-letter code: Cell division topological specificity factor homolog, chloroplastic (229 aa).

Residues M1–S30 constitute a chloroplast transit peptide. Residues V35–D141 form an interaction with MIND1 region. The interval V142 to K169 is homodimerization.

The protein belongs to the MinE family. Homodimer. Interacts with MIND1. These interactions are required for proper intraplastidic localization. Binds to ARC3. As to expression, expressed in green tissues, especially at the shoot apex. Also present in leaves, stems, buds, and flowers, especially in sepals, siliques (tip and base), and anthers (mostly in pollen grains).

It localises to the plastid. Its subcellular location is the chloroplast. In terms of biological role, acts as a topological specificity factor during plastid division and specify plastid constriction sites (such as the Z-ring) in a MCD1-dependent manner. Especially involved in epidermal plastids division in a FTSZ1-dependent manner. Required for the proper formation of FtsZ rings at the division site in nongreen plastids (e.g. etioplasts). May contribute to gravitropism in stems and hypocotyls. Stimulates MIND1 ATPase activity. In cooperation with MIND1, prevents FtsZ ring formation anywhere outside of the mid-plastids. In Arabidopsis thaliana (Mouse-ear cress), this protein is Cell division topological specificity factor homolog, chloroplastic.